A 250-amino-acid polypeptide reads, in one-letter code: Small ribosomal subunit protein uS3 (250 aa).

Positions 39-107 constitute a KH type-2 domain; that stretch reads VREFLTKNLK…PAQVSINEID (69 aa). Residues 215 to 250 are disordered; sequence MNPAPAEERPAKRGRGRGEGQERRGRRGDRAADKGE. The segment covering 220–250 has biased composition (basic and acidic residues); that stretch reads AEERPAKRGRGRGEGQERRGRRGDRAADKGE.

The protein belongs to the universal ribosomal protein uS3 family. In terms of assembly, part of the 30S ribosomal subunit. Forms a tight complex with proteins S10 and S14.

In terms of biological role, binds the lower part of the 30S subunit head. Binds mRNA in the 70S ribosome, positioning it for translation. This is Small ribosomal subunit protein uS3 from Acinetobacter baumannii (strain AB0057).